A 511-amino-acid chain; its full sequence is Ribose import ATP-binding protein RbsA (511 aa).

ABC transporter domains follow at residues 9–245 (FEAK…VGRD) and 261–506 (LRAE…LPRR). Position 41–48 (41–48 (GENGAGKS)) interacts with ATP.

This sequence belongs to the ABC transporter superfamily. Ribose importer (TC 3.A.1.2.1) family. The complex is composed of an ATP-binding protein (RbsA), two transmembrane proteins (RbsC) and a solute-binding protein (RbsB).

The protein resides in the cell inner membrane. The catalysed reaction is D-ribose(out) + ATP + H2O = D-ribose(in) + ADP + phosphate + H(+). Its function is as follows. Part of the ABC transporter complex RbsABC involved in ribose import. Responsible for energy coupling to the transport system. The sequence is that of Ribose import ATP-binding protein RbsA from Rhodopirellula baltica (strain DSM 10527 / NCIMB 13988 / SH1).